Here is a 547-residue protein sequence, read N- to C-terminus: Varicidin biosynthesis cluster MFS-type transporer (547 aa).

The segment covering 1–17 (MTTSTSKNAISKSSQED) has biased composition (polar residues). The disordered stretch occupies residues 1-33 (MTTSTSKNAISKSSQEDLCSDTKDKGSSGGGNE). 11 helical membrane-spanning segments follow: residues 47 to 67 (LVLL…VCIS), 156 to 176 (LAPS…SVFT), 183 to 203 (WCFW…FLFV), 224 to 244 (ALGT…LQWG), 252 to 272 (SWRV…WLYV), 296 to 316 (ILFT…VPIW), 330 to 350 (INFL…GTLV), 360 to 382 (GQWR…WRYN), 392 to 412 (AGTL…PFIA), 422 to 442 (ISLG…VFLA), and 503 to 523 (CFLV…GMEW).

It belongs to the major facilitator superfamily. TCR/Tet family.

Its subcellular location is the cell membrane. In terms of biological role, MFS-type transporer; part of the gene cluster that mediates the biosynthesis of varicidin A, an antifungal natural product containing a cis-octahydrodecalin core. In Talaromyces variabilis (Penicillium variabile), this protein is Varicidin biosynthesis cluster MFS-type transporer.